The chain runs to 565 residues: NAD-dependent malic enzyme (565 aa).

Tyr104 (proton donor) is an active-site residue. Arg157 is an NAD(+) binding site. Lys175 (proton acceptor) is an active-site residue. 3 residues coordinate a divalent metal cation: Glu246, Asp247, and Asp270. Positions 270 and 418 each coordinate NAD(+).

The protein belongs to the malic enzymes family. Homotetramer. Mg(2+) is required as a cofactor. Requires Mn(2+) as cofactor.

It catalyses the reaction (S)-malate + NAD(+) = pyruvate + CO2 + NADH. It carries out the reaction oxaloacetate + H(+) = pyruvate + CO2. This Shigella sonnei (strain Ss046) protein is NAD-dependent malic enzyme.